Consider the following 345-residue polypeptide: ATP-dependent kinase YFH7 (345 aa).

An ATP-binding site is contributed by 31–39; sequence GPPGSGKST.

It belongs to the YFH7 family.

Its function is as follows. ATP-dependent kinase that could be involved in endoplasmic reticulum membrane assembly. The protein is ATP-dependent kinase YFH7 (YFH7) of Candida glabrata (strain ATCC 2001 / BCRC 20586 / JCM 3761 / NBRC 0622 / NRRL Y-65 / CBS 138) (Yeast).